The primary structure comprises 57 residues: Protein Ric1 (57 aa).

Helical transmembrane passes span 8–28 (IPRL…QVGC) and 34–54 (INCL…VYIL).

This sequence belongs to the UPF0057 (PMP3) family.

It is found in the membrane. The polypeptide is Protein Ric1 (RIC1) (Phytophthora infestans (Potato late blight agent)).